A 1102-amino-acid polypeptide reads, in one-letter code: Voltage-gated delayed rectifier potassium channel KCNH8 (1102 aa).

At 1 to 225 the chain is on the cytoplasmic side; it reads MPVMKGLLAP…HFSTFKAGWD (225 aa). Positions 18 to 90 constitute a PAS domain; that stretch reads IATRFDGTHS…LQIEKSLEEK (73 aa). One can recognise a PAC domain in the interval 93–145; the sequence is FKGEIMFYKKNGAPFWCLLDIVPIKNEKGDVVLFLASFKDITDTKVKITSEDK. A compositionally biased stretch (basic and acidic residues) spans 142–151; sequence SEDKKEDRTK. Residues 142 to 162 form a disordered region; it reads SEDKKEDRTKGRSRAGSHFDS. A helical transmembrane segment spans residues 226 to 246; sequence WLILLATFYVAVTVPYNVCFI. Residues 247–255 lie on the Extracellular side of the membrane; the sequence is GNEDLSTTR. A helical transmembrane segment spans residues 256–276; the sequence is STTVSDIAVEILFIIDIILNF. The Cytoplasmic portion of the chain corresponds to 277–298; the sequence is RTTYVSKSGQVIFEARSICIHY. Residues 299–319 form a helical membrane-spanning segment; that stretch reads VTTWFIIDLIAALPFDLLYAF. The N-linked (GlcNAc...) asparagine glycan is linked to Asn320. The Extracellular segment spans residues 320-327; it reads NVTVVSLV. The chain crosses the membrane as a helical; Voltage-sensor span at residues 328–348; that stretch reads HLLKTVRLLRLLRLLQKLDRY. At 349–357 the chain is on the cytoplasmic side; the sequence is SQHSTIVLT. A helical membrane pass occupies residues 358–378; that stretch reads LLMSMFALLAHWMACIWYVIG. At 379 to 419 the chain is on the extracellular side; that stretch reads KMEREDNSLLKWEVGWLHELGKRLESPYYGNNTLGGPSIRS. Residue Asn409 is glycosylated (N-linked (GlcNAc...) asparagine). Positions 420-440 form an intramembrane region, pore-forming; sequence AYIAALYFTLSSLTSVGFGNV. The Selectivity filter motif lies at 434 to 439; that stretch reads SVGFGN. Residues 441 to 448 lie on the Extracellular side of the membrane; it reads SANTDAEK. The helical transmembrane segment at 449 to 469 threads the bilayer; sequence IFSICTMLIGALMHALVFGNV. Over 470 to 1102 the chain is Cytoplasmic; it reads TAIIQRMYSR…DVKDSKAINV (633 aa). The interval 551–668 is cNMP-binding domain; sequence LFECASRGCL…HKFVEDIQHD (118 aa). The span at 684–693 shows a compositional bias: polar residues; that stretch reads RLSNKSTVSQ. Disordered stretches follow at residues 684–743, 764–841, and 960–991; these read RLSN…KKTG, HSPI…PEPR, and LVGS…YSPS. Acidic residues predominate over residues 710–723; sequence VEDEEEEEVEEEET. Polar residues predominate over residues 724 to 737; sequence TSLSPIYTRGSSVS. Residues 968–984 are compositionally biased toward basic and acidic residues; the sequence is TEAHEQNPADSELHHSP.

The protein belongs to the potassium channel family. H (Eag) (TC 1.A.1.20) subfamily. Kv12.1/KCNH8 sub-subfamily. In terms of assembly, the potassium channel is probably composed of a homo- or heterotetrameric complex of pore-forming alpha subunits that can associate with modulating beta subunits.

The protein resides in the membrane. The enzyme catalyses K(+)(in) = K(+)(out). In terms of biological role, pore-forming (alpha) subunit of a voltage-gated delayed rectifier potassium channel that mediates outward-rectifying potassium currents. Elicits a slowly activating, non-inactivating and slowly deactivation outwards potassium current at depolarizating voltages from -30 mV to +50mV. Shows no obvious change in the activation rate from different holding potentials. Activation is strongly dependent on the pH of the external solution. The polypeptide is Voltage-gated delayed rectifier potassium channel KCNH8 (Mus musculus (Mouse)).